Reading from the N-terminus, the 21-residue chain is 20 kDa chaperonin, chloroplastic (21 aa).

It belongs to the GroES chaperonin family. In terms of assembly, forms stable complexes with CPN60 in the presence of ATP.

The protein localises to the plastid. Its subcellular location is the chloroplast. In terms of biological role, seems to function only as a co-chaperone, along with cpn60, and in certain cases is essential for the discharge of biologically active proteins from cpn60. In Pisum sativum (Garden pea), this protein is 20 kDa chaperonin, chloroplastic (CPN21).